We begin with the raw amino-acid sequence, 295 residues long: 4-hydroxy-tetrahydrodipicolinate synthase (295 aa).

Pyruvate is bound at residue Thr-45. The Proton donor/acceptor role is filled by Tyr-131. Lys-159 acts as the Schiff-base intermediate with substrate in catalysis. Position 202 (Val-202) interacts with pyruvate.

The protein belongs to the DapA family. Homotetramer; dimer of dimers.

It is found in the cytoplasm. The enzyme catalyses L-aspartate 4-semialdehyde + pyruvate = (2S,4S)-4-hydroxy-2,3,4,5-tetrahydrodipicolinate + H2O + H(+). The protein operates within amino-acid biosynthesis; L-lysine biosynthesis via DAP pathway; (S)-tetrahydrodipicolinate from L-aspartate: step 3/4. Its function is as follows. Catalyzes the condensation of (S)-aspartate-beta-semialdehyde [(S)-ASA] and pyruvate to 4-hydroxy-tetrahydrodipicolinate (HTPA). The chain is 4-hydroxy-tetrahydrodipicolinate synthase from Methanothrix thermoacetophila (strain DSM 6194 / JCM 14653 / NBRC 101360 / PT) (Methanosaeta thermophila).